A 338-amino-acid polypeptide reads, in one-letter code: Glyceraldehyde-3-phosphate dehydrogenase, cytosolic (338 aa).

NAD(+) is bound by residues 14–15 (RI), D36, and R83. Residues 154 to 156 (SCT), T185, 214 to 215 (TG), and R237 contribute to the D-glyceraldehyde 3-phosphate site. Catalysis depends on C155, which acts as the Nucleophile. N319 contacts NAD(+).

The protein belongs to the glyceraldehyde-3-phosphate dehydrogenase family. As to quaternary structure, homotetramer.

It localises to the cytoplasm. The catalysed reaction is D-glyceraldehyde 3-phosphate + phosphate + NAD(+) = (2R)-3-phospho-glyceroyl phosphate + NADH + H(+). It participates in carbohydrate degradation; glycolysis; pyruvate from D-glyceraldehyde 3-phosphate: step 1/5. Functionally, key enzyme in glycolysis that catalyzes the first step of the pathway by converting D-glyceraldehyde 3-phosphate (G3P) into 3-phospho-D-glyceroyl phosphate. Essential for the maintenance of cellular ATP levels and carbohydrate metabolism. The protein is Glyceraldehyde-3-phosphate dehydrogenase, cytosolic (GAPC) of Ranunculus acris (Meadow buttercup).